Reading from the N-terminus, the 219-residue chain is tRNA (guanine-N(7)-)-methyltransferase (219 aa).

Positions 43, 68, 101, and 124 each coordinate S-adenosyl-L-methionine. Positions 128 and 160 each coordinate substrate.

The protein belongs to the class I-like SAM-binding methyltransferase superfamily. TrmB family.

It carries out the reaction guanosine(46) in tRNA + S-adenosyl-L-methionine = N(7)-methylguanosine(46) in tRNA + S-adenosyl-L-homocysteine. It participates in tRNA modification; N(7)-methylguanine-tRNA biosynthesis. Catalyzes the formation of N(7)-methylguanine at position 46 (m7G46) in tRNA. This chain is tRNA (guanine-N(7)-)-methyltransferase, found in Clostridium beijerinckii (strain ATCC 51743 / NCIMB 8052) (Clostridium acetobutylicum).